A 313-amino-acid polypeptide reads, in one-letter code: Ankyrin repeat family A protein 2 (313 aa).

ANK repeat units lie at residues 148-180, 181-213, 214-246, 247-279, and 280-313; these read ANSL…HTDE, EGFT…LLGK, GRES…EYDW, NGGT…IETD, and SGYN…NIKE.

Interacts (via ANK repeats) with CCDC8 (via PxLPxI/L motif); mediates the interaction with the 3M complex which is composed of CCDC8, CUL7 and OBSL1. Interacts (via ANK repeats) with HDAC4 (via PxLPxI/L motif). Interacts (via ANK repeats) with HDAC5 (via PxLPxI/L motif). Interacts (via ANK repeats) with LRP2/megalin (via PxLPxI/L motif). Interacts (via ANK repeats) with RFX7 (via PxLPxI/L motif). Interacts with AHRR. Interacts with NEK6.

It localises to the cytoplasm. It is found in the cytoskeleton. The protein resides in the membrane. Its function is as follows. May regulate the interaction between the 3M complex and the histone deacetylases HDAC4 and HDAC5. May also regulate LRP2/megalin. The protein is Ankyrin repeat family A protein 2 (ANKRA2) of Bos taurus (Bovine).